The following is a 65-amino-acid chain: Large ribosomal subunit protein bL35 (65 aa).

It belongs to the bacterial ribosomal protein bL35 family.

The chain is Large ribosomal subunit protein bL35 from Phytoplasma mali (strain AT).